A 451-amino-acid polypeptide reads, in one-letter code: MASSDSSYSRKFLLITFLPLSLACLAFLLQWRSGVNDSVTQWFDDNYPFPGMATVSEKRSLRSDSSCVSLLGQSRTQAFPYLRDLKLDHKPDLKPRICITTSTSAGLEQTLPWIFYHKVIGVETFYLFVEGTAASPNVSRVLETIPGVNVIYRTRELEEEQAKSRIWNETWLEKFFYKPCNYELFVKQNLNMEMAITMARDAGMDWILHLDTDELVHPSGTREYSLRNLLRDVPADVDEVIFTNYESSVERDDIKEPFTEVSMFKKNFKHLPREVYYGNYKEATRGNPNYFLTYANGKSAARIQDHLRPNGAHRWHNYKTYPNIKELDEAAILHYTYSKFSDLTSRRDRCGCKPTKKDVKRCFMLDFDRAAFIIASTSTSEEMLQWYRERVVWTDDNLILKLLRKGILTRIYAPMVIIQELREAGVFSSVVTSAHMSLSKNRSNSSTSSNY.

An N-terminal signal peptide occupies residues 1–23 (MASSDSSYSRKFLLITFLPLSLA). N-linked (GlcNAc...) asparagine glycans are attached at residues Asn-36, Asn-137, Asn-168, Asn-441, and Asn-444. The GT92 domain maps to 109 to 345 (QTLPWIFYHK…TYSKFSDLTS (237 aa)).

This sequence belongs to the glycosyltransferase 92 family.

It is found in the secreted. It localises to the cell wall. The protein localises to the cytoplasm. Its subcellular location is the cell membrane. Functionally, involved in the coordination between cell elongation and cellulose synthesis by promoting the expression of genes involved in cell elongation and cellulose synthesis. Acts as a regulator of plasmodesmatal permeability. Maybe a glycosyltransferase. This Arabidopsis thaliana (Mouse-ear cress) protein is Glycosyltransferase-like At2g41451.